The chain runs to 365 residues: Probable dual-specificity RNA methyltransferase RlmN (365 aa).

Glutamate 111 functions as the Proton acceptor in the catalytic mechanism. A Radical SAM core domain is found at alanine 117 to aspartate 351. An intrachain disulfide couples cysteine 124 to cysteine 356. Cysteine 131, cysteine 135, and cysteine 138 together coordinate [4Fe-4S] cluster. S-adenosyl-L-methionine contacts are provided by residues glycine 182–glutamate 183, serine 214, serine 237–histidine 239, and asparagine 313. Cysteine 356 functions as the S-methylcysteine intermediate in the catalytic mechanism.

This sequence belongs to the radical SAM superfamily. RlmN family. It depends on [4Fe-4S] cluster as a cofactor.

Its subcellular location is the cytoplasm. It catalyses the reaction adenosine(2503) in 23S rRNA + 2 reduced [2Fe-2S]-[ferredoxin] + 2 S-adenosyl-L-methionine = 2-methyladenosine(2503) in 23S rRNA + 5'-deoxyadenosine + L-methionine + 2 oxidized [2Fe-2S]-[ferredoxin] + S-adenosyl-L-homocysteine. The enzyme catalyses adenosine(37) in tRNA + 2 reduced [2Fe-2S]-[ferredoxin] + 2 S-adenosyl-L-methionine = 2-methyladenosine(37) in tRNA + 5'-deoxyadenosine + L-methionine + 2 oxidized [2Fe-2S]-[ferredoxin] + S-adenosyl-L-homocysteine. Specifically methylates position 2 of adenine 2503 in 23S rRNA and position 2 of adenine 37 in tRNAs. The protein is Probable dual-specificity RNA methyltransferase RlmN of Cytophaga hutchinsonii (strain ATCC 33406 / DSM 1761 / CIP 103989 / NBRC 15051 / NCIMB 9469 / D465).